A 317-amino-acid chain; its full sequence is Probable methyltransferase tdiE (317 aa).

This sequence belongs to the methyltransferase superfamily. LaeA methyltransferase family.

Its pathway is secondary metabolite biosynthesis. In terms of biological role, probable methyltransferase; part of the gene cluster that mediates the biosynthesis of terrequinone A, an antitumor agent. The first step in the biosynthetic pathway for terrequinone A is formation of indole pyruvic acid (IPA) from L-tryptophan by the aminotransferase tdiD. The nonribosomal peptide synthase tdiA then immediately converts unstable IPA to didemethylasterriquinone D (DDAQ D), via condensation of 2 IPA molecules. The symmetric connectivity of the 2 IPA molecules is thought to arise by head-to-tail dual Claisen condensations facilitated by the TE domain. TdiB then catalyzes reverse prenylation by transferring dimethylallyl diphosphate to carbon atom 2' of DDAQ D, to yield asterriquinone C-1. Finally, tdiC and tdiE enzymes robustly convert asterriquinone C-1 to terrequinone A via a transformation involving regular prenylation at carbon atom 5, which requires elimination of the hydroxy group on C-5. The chain is Probable methyltransferase tdiE from Emericella nidulans (strain FGSC A4 / ATCC 38163 / CBS 112.46 / NRRL 194 / M139) (Aspergillus nidulans).